A 380-amino-acid chain; its full sequence is MAPNLRKSHPLLKMINNSLIDLPTPSNISAWWNFGSLLGICLATQILTGLLLAAHYTADTTLAFSSVAHTCRNVQYGWLIRNLHANGASFFFICIYLHIGRGLYYGSYLYKETWNTGVILLLTLMATAFVGYVLPWGQMSFWGATVITNLFSAVPYIGQTLVEWAWGGFSVDNPTLTRFFTLHFLLPFMIMGLTLIHLTFLHESGSNNPLGIVSNCDKIPFHPYFSLKDTLGFMFMLLPLMTLALFSPNLLGDPENFTPANPLVTPPHIKPEWYFLFAYAILRSIPNKLGGVLALAASVLILFLAPLLHKSKQRTMTFRPLFQLLFWTLTANLLILTWVGSQPVEHPFIIIGQLASLTYFTILLILFPIIGALENKMLNY.

4 consecutive transmembrane segments (helical) span residues phenylalanine 34–alanine 54, tryptophan 78–isoleucine 99, tryptophan 114–leucine 134, and phenylalanine 179–threonine 199. Positions 84 and 98 each coordinate heme b. The heme b site is built by histidine 183 and histidine 197. Histidine 202 is a binding site for a ubiquinone. 4 consecutive transmembrane segments (helical) span residues leucine 227 to serine 247, leucine 289 to histidine 309, leucine 321 to serine 341, and phenylalanine 348 to proline 368.

The protein belongs to the cytochrome b family. As to quaternary structure, the cytochrome bc1 complex contains 11 subunits: 3 respiratory subunits (MT-CYB, CYC1 and UQCRFS1), 2 core proteins (UQCRC1 and UQCRC2) and 6 low-molecular weight proteins (UQCRH/QCR6, UQCRB/QCR7, UQCRQ/QCR8, UQCR10/QCR9, UQCR11/QCR10 and a cleavage product of UQCRFS1). This cytochrome bc1 complex then forms a dimer. Heme b is required as a cofactor.

Its subcellular location is the mitochondrion inner membrane. Its function is as follows. Component of the ubiquinol-cytochrome c reductase complex (complex III or cytochrome b-c1 complex) that is part of the mitochondrial respiratory chain. The b-c1 complex mediates electron transfer from ubiquinol to cytochrome c. Contributes to the generation of a proton gradient across the mitochondrial membrane that is then used for ATP synthesis. The polypeptide is Cytochrome b (MT-CYB) (Grus nigricollis (Black-necked crane)).